We begin with the raw amino-acid sequence, 499 residues long: Lysine--tRNA ligase (499 aa).

Residues Glu-408 and Glu-415 each contribute to the Mg(2+) site.

It belongs to the class-II aminoacyl-tRNA synthetase family. In terms of assembly, homodimer. Mg(2+) is required as a cofactor.

The protein localises to the cytoplasm. It catalyses the reaction tRNA(Lys) + L-lysine + ATP = L-lysyl-tRNA(Lys) + AMP + diphosphate. This is Lysine--tRNA ligase from Bacillus cereus (strain G9842).